A 322-amino-acid polypeptide reads, in one-letter code: Putative integrase ORF3 (322 aa).

Positions 153 to 322 (RGKLTDFKSI…SSKEMFLQNI (170 aa)) constitute an Integrase catalytic domain.

It belongs to the plectrovirus integrase ORF3 family.

This protein may encode an integrase, which is necessary for integration of the viral DNA into host genome. This is Putative integrase ORF3 from Spiroplasma virus SpV1-R8A2 B (SpV1).